Consider the following 554-residue polypeptide: Valerianol synthase TPS8 (554 aa).

A DDXXD motif motif is present at residues 288 to 292; the sequence is QHSVG. Residues Asp307, Asp311, Asp452, Ser456, and Glu460 each coordinate Mg(2+).

Belongs to the terpene synthase family. Mg(2+) serves as cofactor.

The catalysed reaction is (2E,6E)-farnesyl diphosphate + H2O = valerianol + diphosphate. Its pathway is secondary metabolite biosynthesis; terpenoid biosynthesis. Terpene synthase that catalyzes the biosynthesis of the terpene valerianol. In Camellia sinensis (Tea plant), this protein is Valerianol synthase TPS8.